Consider the following 618-residue polypeptide: Nuclear RNA export factor 1 (618 aa).

Residues 1–15 (MADEGKSYNEHDDRV) show a composition bias toward basic and acidic residues. Positions 1–113 (MADEGKSYNE…RGGAGTSQDG (113 aa)) are disordered. Ala2 is subject to N-acetylalanine. Residues 2–59 (ADEGKSYNEHDDRVSFPQRRKKGRGPFRWKCGVGNRRSGRGGSGIRSSRFEEDDGDVA) form a minor non-specific RNA-binding region. The segment at 2–117 (ADEGKSYNEH…GTSQDGTTKN (116 aa)) is RNA-binding (RBD). Residues 2–197 (ADEGKSYNEH…IIINSSAPPY (196 aa)) form an interaction with ALYREF/THOC4 and LUZP4 region. Residues 19–28 (QRRKKGRGPF) are compositionally biased toward basic residues. The residue at position 41 (Arg41) is an Asymmetric dimethylarginine; alternate. An Omega-N-methylarginine; alternate modification is found at Arg41. The interval 60 to 117 (MNDPQDGPRVRFNPYTTRPNRRRDTWHDRDRIHVTVRRDRAPQERGGAGTSQDGTTKN) is major non-specific RNA-binding. The RNA binding stretch occupies residues 60-117 (MNDPQDGPRVRFNPYTTRPNRRRDTWHDRDRIHVTVRRDRAPQERGGAGTSQDGTTKN). A Nuclear localization signal motif is present at residues 66–99 (GPRVRFNPYTTRPNRRRDTWHDRDRIHVTVRRDR). The span at 81–102 (RRDTWHDRDRIHVTVRRDRAPQ) shows a compositional bias: basic and acidic residues. The short motif at 82–109 (RDTWHDRDRIHVTVRRDRAPQERGGAGT) is the Nuclear export signal element. In terms of domain architecture, RRM spans 118-197 (WFKITIPYGK…IIINSSAPPY (80 aa)). Residue Tyr125 is modified to 3'-nitrotyrosine. 4 LRR repeats span residues 265-290 (ELLS…QKAP), 291-314 (NLKI…IKGL), 315-342 (KLEE…TIRE), and 343-370 (RFPK…TMLP). Positions 385–535 (LVLHFLQQYY…LCIVNDELFV (151 aa)) constitute an NTF2 domain. The region spanning 564 to 618 (QEQQDMLQAFSTQSGMNLEWSQKCLQDNNWDYTRSAQAFTHLKAKGEIPEVAFMK) is the TAP-C domain.

It belongs to the NXF family. Heterodimer (via NTF2 domain) with NXT1. The formation of NXF1-NXT1 heterodimers is required for the NXF1-mediated nuclear mRNA export. Forms a complex with RANBP2/NUP358, NXT1 and RANGAP1. Associates with the exon junction complex (EJC). Associates with the transcription/export (TREX) complex. Found in a mRNA complex with UPF3A and UPF3B. Found in a post-splicing complex with RBM8A, UPF1, UPF2, UPF3A, UPF3B and RNPS1. Interacts (via N-terminus) with DHX9 (via N-terminus); this interaction is direct and negatively regulates NXF1-mediated nuclear export of constitutive transport element (CTE)-containing cellular mRNAs. Interacts with FYTTD1/UIF. Interacts with EIF4A3. Interacts with NUP42. Interacts with ALYREF/THOC4. Interacts with CHTOP. Interacts with FRG1 (via N-terminus). Interacts with LUZP4. Interacts with FMR1; the interaction occurs in a mRNA-dependent and polyribosomes-independent manner in the nucleus. Interacts with CPSF6 (via N-terminus); this interaction is direct. Interacts with RBM15. Interacts with RBM15B. Interacts with MCM3AP; this interaction is not mediated by RNA. Interacts with DDX3X (via C-terminus); this interaction may be partly involved in DDX3X nuclear export and in NXF1 localization to stress granules. Interacts with PABPC1/PABP1.

The protein resides in the nucleus. It localises to the nucleoplasm. It is found in the nucleus speckle. The protein localises to the nuclear pore complex. Its subcellular location is the nucleus envelope. The protein resides in the cytoplasm. It localises to the stress granule. Its function is as follows. Involved in the nuclear export of mRNA species bearing retroviral constitutive transport elements (CTE) and in the export of mRNA from the nucleus to the cytoplasm (TAP/NFX1 pathway). The NXF1-NXT1 heterodimer is involved in the export of HSP70 mRNA in conjunction with ALYREF/THOC4 and THOC5 components of the TREX complex. ALYREF/THOC4-bound mRNA is thought to be transferred to the NXF1-NXT1 heterodimer for export. Also involved in nuclear export of m6A-containing mRNAs: interaction between SRSF3 and YTHDC1 facilitates m6A-containing mRNA-binding to both SRSF3 and NXF1, promoting mRNA nuclear export. This is Nuclear RNA export factor 1 (Nxf1) from Rattus norvegicus (Rat).